Consider the following 856-residue polypeptide: MGSLFRSETMCLAQLFLQSGTAYECLSALGEKGLVQFRDLNQNVSSFQRKFVGEVKRCEELERILVYLVQEINRADIPLPEGEASPPAPPLKQVLEMQEQLQKLEVELREVTKNKEKLRKNLLELIEYTHMLRVTKTFVKRNVEFEPTYEEFPSLESDSLLDYSCMQRLGAKLGFVSGLINQGKVEAFEKMLWRVCKGYTIVSYAELDESLEDPETGEVIKWYVFLISFWGEQIGHKVKKICDCYHCHVYPYPNTAEERREIQEGLNTRIQDLYTVLHKTEDYLRQVLCKAAESVYSRVIQVKKMKAIYHMLNMCSFDVTNKCLIAEVWCPEADLQDLRRALEEGSRESGATIPSFMNIIPTKETPPTRIRTNKFTEGFQNIVDAYGVGSYREVNPALFTIITFPFLFAVMFGDFGHGFVMFLFALLLVLNENHPRLNQSQEIMRMFFNGRYILLLMGLFSVYTGLIYNDCFSKSVNLFGSGWNVSAMYSSSHPPAEHKKMVLWNDSVVRHNSILQLDPSIPGVFRGPYPLGIDPIWNLATNRLTFLNSFKMKMSVILGIIHMTFGVILGIFNHLHFRKKFNIYLVSIPELLFMLCIFGYLIFMIFYKWLVFSAETSRVAPSILIEFINMFLFPASKTSGLYTGQEYVQRVLLVVTALSVPVLFLGKPLFLLWLHNGRSCFGVNRSGYTLIRKDSEEEVSLLGSQDIEEGNHQVEDGCREMACEEFNFGEILMTQVIHSIEYCLGCISNTASYLRLWALSLAHAQLSDVLWAMLMRVGLRVDTTYGVLLLLPVIALFAVLTIFILLIMEGLSAFLHAIRLHWVEFQNKFYVGAGTKFVPFSFSLLSSKFNNDDSVA.

Residues 1–393 (MGSLFRSETM…DAYGVGSYRE (393 aa)) lie on the Cytoplasmic side of the membrane. The helical transmembrane segment at 394-412 (VNPALFTIITFPFLFAVMF) threads the bilayer. Over 413-414 (GD) the chain is Vacuolar. A helical transmembrane segment spans residues 415–431 (FGHGFVMFLFALLLVLN). Residues 432-445 (ENHPRLNQSQEIMR) are Cytoplasmic-facing. A helical transmembrane segment spans residues 446 to 475 (MFFNGRYILLLMGLFSVYTGLIYNDCFSKS). Residues 476 to 549 (VNLFGSGWNV…ATNRLTFLNS (74 aa)) lie on the Vacuolar side of the membrane. N-linked (GlcNAc...) asparagine glycosylation is found at N484 and N505. Residues 550-569 (FKMKMSVILGIIHMTFGVIL) traverse the membrane as a helical segment. Topologically, residues 570–587 (GIFNHLHFRKKFNIYLVS) are cytoplasmic. A helical membrane pass occupies residues 588 to 608 (IPELLFMLCIFGYLIFMIFYK). Residues 609–651 (WLVFSAETSRVAPSILIEFINMFLFPASKTSGLYTGQEYVQRV) lie on the Vacuolar side of the membrane. Residues 652–671 (LLVVTALSVPVLFLGKPLFL) traverse the membrane as a helical segment. Residues 672-739 (LWLHNGRSCF…EILMTQVIHS (68 aa)) lie on the Cytoplasmic side of the membrane. A phosphoserine mark is found at S695 and S700. Residues 740 to 764 (IEYCLGCISNTASYLRLWALSLAHA) form a helical membrane-spanning segment. Topologically, residues 765–785 (QLSDVLWAMLMRVGLRVDTTY) are vacuolar. Residues 786 to 824 (GVLLLLPVIALFAVLTIFILLIMEGLSAFLHAIRLHWVE) traverse the membrane as a helical segment. Over 825 to 856 (FQNKFYVGAGTKFVPFSFSLLSSKFNNDDSVA) the chain is Cytoplasmic.

Belongs to the V-ATPase 116 kDa subunit family. As to quaternary structure, V-ATPase is a heteromultimeric enzyme made up of two complexes: the ATP-hydrolytic V1 complex and the proton translocation V0 complex. The V1 complex consists of three catalytic AB heterodimers that form a heterohexamer, three peripheral stalks each consisting of EG heterodimers, one central rotor including subunits D and F, and the regulatory subunits C and H. The proton translocation complex V0 consists of the proton transport subunit a, a ring of proteolipid subunits c9c'', rotary subunit d, subunits e and f, and the accessory subunits ATP6AP1/Ac45 and ATP6AP2/PRR. Directly interacts with PSCD2 through its N-terminal cytosolic tail in an intra-endosomal acidification-dependent manner. Disruption of this interaction results in the inhibition of endocytosis. Interacts with SPAAR.

Its subcellular location is the cell membrane. It localises to the endosome membrane. Its function is as follows. Subunit of the V0 complex of vacuolar(H+)-ATPase (V-ATPase), a multisubunit enzyme composed of a peripheral complex (V1) that hydrolyzes ATP and a membrane integral complex (V0) that translocates protons. V-ATPase is responsible for acidifying and maintaining the pH of intracellular compartments and in some cell types, is targeted to the plasma membrane, where it is responsible for acidifying the extracellular environment. Essential component of the endosomal pH-sensing machinery. May play a role in maintaining the Golgi functions, such as glycosylation maturation, by controlling the Golgi pH. In aerobic conditions, involved in intracellular iron homeostasis, thus triggering the activity of Fe(2+) prolyl hydroxylase (PHD) enzymes, and leading to HIF1A hydroxylation and subsequent proteasomal degradation. The chain is V-type proton ATPase 116 kDa subunit a 2 (ATP6V0A2) from Homo sapiens (Human).